Reading from the N-terminus, the 337-residue chain is Glycerol-3-phosphate dehydrogenase [NAD(P)+] (337 aa).

Residues Ser-12, Trp-13, and Lys-110 each contribute to the NADPH site. Positions 110, 141, and 143 each coordinate sn-glycerol 3-phosphate. NADPH is bound at residue Ala-145. Sn-glycerol 3-phosphate contacts are provided by Lys-196, Asp-249, Ser-259, Arg-260, and Asn-261. The Proton acceptor role is filled by Lys-196. Residue Arg-260 participates in NADPH binding. Residues Val-284 and Glu-286 each contribute to the NADPH site.

This sequence belongs to the NAD-dependent glycerol-3-phosphate dehydrogenase family.

It is found in the cytoplasm. The enzyme catalyses sn-glycerol 3-phosphate + NAD(+) = dihydroxyacetone phosphate + NADH + H(+). It carries out the reaction sn-glycerol 3-phosphate + NADP(+) = dihydroxyacetone phosphate + NADPH + H(+). It participates in membrane lipid metabolism; glycerophospholipid metabolism. Catalyzes the reduction of the glycolytic intermediate dihydroxyacetone phosphate (DHAP) to sn-glycerol 3-phosphate (G3P), the key precursor for phospholipid synthesis. In Levilactobacillus brevis (strain ATCC 367 / BCRC 12310 / CIP 105137 / JCM 1170 / LMG 11437 / NCIMB 947 / NCTC 947) (Lactobacillus brevis), this protein is Glycerol-3-phosphate dehydrogenase [NAD(P)+].